Reading from the N-terminus, the 1016-residue chain is DENN domain-containing protein 1A (1016 aa).

Positions 13 to 145 (FEVYVEVAYP…HRLPIPDPGV (133 aa)) constitute a uDENN domain. A cDENN domain is found at 162-298 (ELPSIPENRN…VISSLKNRLK (137 aa)). One can recognise a dDENN domain in the interval 300–378 (VSTTTGDGVA…DGRLDLLNSG (79 aa)). The FXDXF motif signature appears at 381 to 385 (FSDVF). The interval 453-565 (DITENGCVSS…GPTPAPPDRA (113 aa)) is disordered. A Phosphoserine modification is found at S473. A compositionally biased stretch (basic and acidic residues) spans 479 to 489 (QDPRLREDRRP). Residues 500–509 (PRPHVVRRPK) show a composition bias toward basic residues. T519 is subject to Phosphothreonine. 6 positions are modified to phosphoserine: S520, S522, S523, S536, S538, and S546. The Clathrin box motif lies at 569 to 578 (DLLEDVFSSL). S592 is modified (phosphoserine). The tract at residues 681–737 (LSPSIKEETPIPTPGSITIPRPQGRKTPELGIVPPPPTARPAKLQAAGGPLGDFSSE) is disordered. A Phosphoserine modification is found at S750. R760 is modified (omega-N-methylarginine). 2 disordered regions span residues 763-783 (PQGPTELLQPPSPAPGAAGTG) and 935-1016 (SARA…ETFE). Over residues 954–970 (LLPPRPPQSLQPTPQPS) the composition is skewed to pro residues. Basic and acidic residues-rich tracts occupy residues 977–988 (DPFEDLLRKTKQ) and 1007–1016 (QLRRQWETFE).

Interacts with RAB35. Interacts with clathrin and with the adapter protein complex 2, AP-2. Interacts with ITSN1 and SH3GL2. Interacts (when phosphorylated) with YWHAE. Post-translationally, phosphorylated on serine and/or threonine in an Akt-dependent manner. Phosphorylation probably regulates the guanine nucleotide exchange factor (GEF) activity, possibly by disrupting an intramolecular interaction between the DENN domain and the C-terminus of the protein, thereby relieving the autoinhibition.

The protein localises to the cytoplasmic vesicle. It is found in the clathrin-coated vesicle membrane. Its subcellular location is the presynaptic cell membrane. Its activity is regulated as follows. The guanine nucleotide exchange factor (GEF) activity is autoinhibited. Autoinhibition may be the result of intramolecular interaction between the DENN domain and the C-terminus, which is disrupted upon phosphorylation. Activation is regulated by Akt activation. Its function is as follows. Guanine nucleotide exchange factor (GEF) regulating clathrin-mediated endocytosis through RAB35 activation. Promotes the exchange of GDP to GTP, converting inactive GDP-bound RAB35 into its active GTP-bound form. Regulates clathrin-mediated endocytosis of synaptic vesicles and mediates exit from early endosomes. Binds phosphatidylinositol-phosphates (PtdInsPs), with some preference for PtdIns(3)P. This chain is DENN domain-containing protein 1A (Dennd1a), found in Mus musculus (Mouse).